The sequence spans 202 residues: Small ribosomal subunit protein uS4 (202 aa).

The interval 22 to 43 (TRKSARRAYPPGQHGQNRKKRS) is disordered. The 63-residue stretch at 90–152 (MRLDNTVFRL…APSRKLVENN (63 aa)) folds into the S4 RNA-binding domain.

Belongs to the universal ribosomal protein uS4 family. In terms of assembly, part of the 30S ribosomal subunit. Contacts protein S5. The interaction surface between S4 and S5 is involved in control of translational fidelity.

In terms of biological role, one of the primary rRNA binding proteins, it binds directly to 16S rRNA where it nucleates assembly of the body of the 30S subunit. Functionally, with S5 and S12 plays an important role in translational accuracy. The polypeptide is Small ribosomal subunit protein uS4 (Trichormus variabilis (strain ATCC 29413 / PCC 7937) (Anabaena variabilis)).